Consider the following 184-residue polypeptide: Ribosome maturation factor RimM (184 aa).

Residues 104 to 184 (SEDEFYWREL…RIEVDWDPGF (81 aa)) enclose the PRC barrel domain.

The protein belongs to the RimM family. As to quaternary structure, binds ribosomal protein uS19.

Its subcellular location is the cytoplasm. An accessory protein needed during the final step in the assembly of 30S ribosomal subunit, possibly for assembly of the head region. Essential for efficient processing of 16S rRNA. May be needed both before and after RbfA during the maturation of 16S rRNA. It has affinity for free ribosomal 30S subunits but not for 70S ribosomes. The sequence is that of Ribosome maturation factor RimM from Vibrio atlanticus (strain LGP32) (Vibrio splendidus (strain Mel32)).